The chain runs to 157 residues: MSDDNQTKLEAADIQALLAVLPHRYPFLLIDRIVDIDGDVSATGIKNVTINEPHFTGHFPENPIMPGVLIVEAMAQTAGAISLLQRKTGRPGVVYFMTIDSAKFRRPVVPGDRLLLYVKKIKQRANISKYECVAEVDGVKVAEAEVAAMISVADENL.

Residue H58 is part of the active site.

The protein belongs to the thioester dehydratase family. FabZ subfamily.

It localises to the cytoplasm. The enzyme catalyses a (3R)-hydroxyacyl-[ACP] = a (2E)-enoyl-[ACP] + H2O. Involved in unsaturated fatty acids biosynthesis. Catalyzes the dehydration of short chain beta-hydroxyacyl-ACPs and long chain saturated and unsaturated beta-hydroxyacyl-ACPs. This chain is 3-hydroxyacyl-[acyl-carrier-protein] dehydratase FabZ, found in Brucella melitensis biotype 2 (strain ATCC 23457).